A 214-amino-acid chain; its full sequence is Large ribosomal subunit protein uL3 (214 aa).

Gln151 is subject to N5-methylglutamine.

The protein belongs to the universal ribosomal protein uL3 family. In terms of assembly, part of the 50S ribosomal subunit. Forms a cluster with proteins L14 and L19. Post-translationally, methylated by PrmB.

One of the primary rRNA binding proteins, it binds directly near the 3'-end of the 23S rRNA, where it nucleates assembly of the 50S subunit. The sequence is that of Large ribosomal subunit protein uL3 from Magnetococcus marinus (strain ATCC BAA-1437 / JCM 17883 / MC-1).